We begin with the raw amino-acid sequence, 257 residues long: Gamma-secretase subunit APH-1B (257 aa).

7 consecutive transmembrane segments (helical) span residues 5–25 (VFFG…VFTI), 32–52 (IIFL…SSLV), 70–90 (YLLI…RFAY), 115–135 (LLAY…SFVN), 158–178 (YSAF…IVFF), 186–206 (WGIL…TFIS), and 213–233 (LASA…AAGG).

It belongs to the APH-1 family. Probable component of the gamma-secretase complex, a complex composed of a presenilin homodimer (PSEN1 or PSEN2), nicastrin (NCSTN), APH1 (APH1A or APH1B) and PEN2. Such minimal complex is sufficient for secretase activity, although other components may exist. Interacts with PSEN1 and PSEN2.

The protein localises to the membrane. In terms of biological role, probable subunit of the gamma-secretase complex, an endoprotease complex that catalyzes the intramembrane cleavage of integral proteins such as Notch receptors and APP (amyloid-beta precursor protein). It probably represents a stabilizing cofactor for the presenilin homodimer that promotes the formation of a stable complex. Probably present in a minority of gamma-secretase complexes compared to APH1A. The chain is Gamma-secretase subunit APH-1B (APH1B) from Pongo abelii (Sumatran orangutan).